Consider the following 677-residue polypeptide: NADPH--cytochrome P450 reductase (677 aa).

N-acetylglycine is present on Gly2. Residues 2 to 21 (GDSHVDTSSTVSEAVAEEVS) are Lumenal-facing. The helical transmembrane segment at 22-42 (LFSMTDMILFSLIVGLLTYWF) threads the bilayer. Residues 43 to 677 (LFRKKKEEVP…KGRYSLDVWS (635 aa)) are Cytoplasmic-facing. The residue at position 63 (Ser63) is a Phosphoserine. In terms of domain architecture, Flavodoxin-like spans 80–224 (IIVFYGSQTG…DFITWREQFW (145 aa)). Residues 86 to 91 (SQTGTA), 138 to 141 (ATYG), 173 to 182 (LGNKTYEHFN), and Asp208 each bind FMN. Residues 279–521 (KNPFLAAVTT…FVRKSQFRLP (243 aa)) form the FAD-binding FR-type domain. Residue Arg298 coordinates NADP(+). FAD is bound by residues Arg424, 454–457 (RYYS), 472–474 (CAV), Tyr478, and 488–491 (GVAT). NADP(+)-binding positions include Thr535, 596-597 (SR), 602-606 (KVYVQ), and Asp638. An FAD-binding site is contributed by Trp676.

Belongs to the NADPH--cytochrome P450 reductase family. This sequence in the N-terminal section; belongs to the flavodoxin family. The protein in the C-terminal section; belongs to the flavoprotein pyridine nucleotide cytochrome reductase family. The cofactor is FAD. FMN is required as a cofactor.

Its subcellular location is the endoplasmic reticulum membrane. It catalyses the reaction 2 oxidized [cytochrome P450] + NADPH = 2 reduced [cytochrome P450] + NADP(+) + H(+). This enzyme is required for electron transfer from NADP to cytochrome P450 in microsomes. It can also provide electron transfer to heme oxygenase and cytochrome B5. The sequence is that of NADPH--cytochrome P450 reductase from Homo sapiens (Human).